Here is a 250-residue protein sequence, read N- to C-terminus: Glutathione transferase omega-1 (250 aa).

Residues 21 to 101 (SKGSFRVYNM…YLDDAFPETR (81 aa)) enclose the GST N-terminal domain. Residue Cys-33 is the Nucleophile of the active site. Residues Lys-60 and 85–86 (ES) contribute to the glutathione site. One can recognise a GST C-terminal domain in the interval 106 to 234 (DPYEKVQQKL…TQSLEHGAAF (129 aa)).

It belongs to the GST superfamily. Omega family. As to quaternary structure, homodimer. Expressed in the intestinal cells.

It is found in the cytoplasm. It carries out the reaction RX + glutathione = an S-substituted glutathione + a halide anion + H(+). It catalyses the reaction L-dehydroascorbate + 2 glutathione = glutathione disulfide + L-ascorbate. The catalysed reaction is methylarsonate + 2 glutathione + H(+) = methylarsonous acid + glutathione disulfide + H2O. Exhibits glutathione-dependent thiol transferase activity. Has dehydroascorbate reductase activity and may contribute to the recycling of ascorbic acid. Participates in the biotransformation of inorganic arsenic and reduces monomethylarsonic acid (MMA). Protects against environmental stress and oxidative stress. This chain is Glutathione transferase omega-1 (gsto-1), found in Caenorhabditis elegans.